The chain runs to 107 residues: Nucleoid-associated protein Oant_0022 (107 aa).

It belongs to the YbaB/EbfC family. Homodimer.

It is found in the cytoplasm. The protein localises to the nucleoid. Binds to DNA and alters its conformation. May be involved in regulation of gene expression, nucleoid organization and DNA protection. The protein is Nucleoid-associated protein Oant_0022 of Brucella anthropi (strain ATCC 49188 / DSM 6882 / CCUG 24695 / JCM 21032 / LMG 3331 / NBRC 15819 / NCTC 12168 / Alc 37) (Ochrobactrum anthropi).